The chain runs to 208 residues: Uracil phosphoribosyltransferase (208 aa).

5-phospho-alpha-D-ribose 1-diphosphate is bound by residues Arg-78, Arg-103, and 130 to 138; that span reads DPMLATGGT. Residues Ile-193 and 198–200 each bind uracil; that span reads GDA. Position 199 (Asp-199) interacts with 5-phospho-alpha-D-ribose 1-diphosphate.

This sequence belongs to the UPRTase family. Mg(2+) is required as a cofactor.

It catalyses the reaction UMP + diphosphate = 5-phospho-alpha-D-ribose 1-diphosphate + uracil. Its pathway is pyrimidine metabolism; UMP biosynthesis via salvage pathway; UMP from uracil: step 1/1. With respect to regulation, allosterically activated by GTP. Catalyzes the conversion of uracil and 5-phospho-alpha-D-ribose 1-diphosphate (PRPP) to UMP and diphosphate. The chain is Uracil phosphoribosyltransferase from Oleidesulfovibrio alaskensis (strain ATCC BAA-1058 / DSM 17464 / G20) (Desulfovibrio alaskensis).